Reading from the N-terminus, the 249-residue chain is Glucosamine-6-phosphate deaminase (249 aa).

Asp67 acts as the Proton acceptor; for enolization step in catalysis. Asn136 functions as the For ring-opening step in the catalytic mechanism. His138 acts as the Proton acceptor; for ring-opening step in catalysis. Glu143 serves as the catalytic For ring-opening step.

The protein belongs to the glucosamine/galactosamine-6-phosphate isomerase family. NagB subfamily.

It catalyses the reaction alpha-D-glucosamine 6-phosphate + H2O = beta-D-fructose 6-phosphate + NH4(+). It functions in the pathway amino-sugar metabolism; N-acetylneuraminate degradation; D-fructose 6-phosphate from N-acetylneuraminate: step 5/5. Functionally, catalyzes the reversible isomerization-deamination of glucosamine 6-phosphate (GlcN6P) to form fructose 6-phosphate (Fru6P) and ammonium ion. This chain is Glucosamine-6-phosphate deaminase, found in Clostridioides difficile (strain 630) (Peptoclostridium difficile).